Consider the following 463-residue polypeptide: Glutamate-1-semialdehyde 2,1-aminomutase, chloroplastic (463 aa).

The N-terminal 30 residues, 1-30 (MQMQLNAKTVQGAFKAQRPRSVRGNVAVRA), are a transit peptide targeting the chloroplast. At lysine 303 the chain carries N6-(pyridoxal phosphate)lysine.

The protein belongs to the class-III pyridoxal-phosphate-dependent aminotransferase family. HemL subfamily. Homodimer. Requires pyridoxal 5'-phosphate as cofactor.

It is found in the plastid. Its subcellular location is the chloroplast. The enzyme catalyses (S)-4-amino-5-oxopentanoate = 5-aminolevulinate. The protein operates within porphyrin-containing compound metabolism; protoporphyrin-IX biosynthesis; 5-aminolevulinate from L-glutamyl-tRNA(Glu): step 2/2. It participates in porphyrin-containing compound metabolism; chlorophyll biosynthesis. The chain is Glutamate-1-semialdehyde 2,1-aminomutase, chloroplastic (GSA) from Chlamydomonas reinhardtii (Chlamydomonas smithii).